The chain runs to 78 residues: MKLTCMVIVAVLLLTACQLITADDSRGTQKHRSLRSTTKVSKATDCIEAGNYCGPTVMKICCGFCSPYSKICMNYPKN.

The signal sequence occupies residues 1–22 (MKLTCMVIVAVLLLTACQLITA). The propeptide occupies 23–42 (DDSRGTQKHRSLRSTTKVSK). 3 disulfides stabilise this stretch: cysteine 46–cysteine 62, cysteine 53–cysteine 65, and cysteine 61–cysteine 72.

Belongs to the conotoxin O1 superfamily. Expressed by the venom duct.

It localises to the secreted. Omega-conotoxins act at presynaptic membranes, they bind and block voltage-gated calcium channels (Cav). This is Omega-conotoxin-like SO-4 (SO4) from Conus striatus (Striated cone).